The following is a 664-amino-acid chain: Putative carboxypeptidase suro-1 (664 aa).

An N-terminal signal peptide occupies residues 1-23; it reads MRYLCKSILLAVHTILLVGSVCC. The propeptide at 24–110 is activation peptide; sequence STDVHNTDDK…MSVPDVEKLI (87 aa). The Peptidase M14 domain maps to 160–473; the sequence is DYASYADMVK…EGFREVVDAV (314 aa). Positions 219 and 222 each coordinate Zn(2+). Residues 219-222, Arg281, and 306-307 each bind substrate; these read HARE and NR. His361 contributes to the Zn(2+) binding site. A substrate-binding site is contributed by 362 to 363; sequence SY. Catalysis depends on Glu437, which acts as the Proton donor/acceptor. Residues 512 to 543 are compositionally biased toward low complexity; it reads ASQAAGSTTRSTTTLKTSTTSVSTTSEATSPS. Positions 512–590 are disordered; that stretch reads ASQAAGSTTR…TTTTEEEDVT (79 aa). Residues 564 to 573 show a composition bias toward pro residues; sequence PTPPMAPPIM. Over residues 574-583 the composition is skewed to low complexity; that stretch reads SPSTEFSTTT. The ShKT domain maps to 621-657; the sequence is CRDMRYSCGFWLKNNKQVCEEQQSFMRAQCAYTCKFC. Disulfide bonds link Cys621-Cys657, Cys628-Cys650, and Cys639-Cys654.

Belongs to the peptidase M14 family. Zn(2+) serves as cofactor. As to expression, localizes in stripes along the cuticle.

The protein resides in the cytoplasmic vesicle. The protein localises to the secreted. May play a role in processing or organization of cuticle collagen proteins, including rol-6 and col-19. The sequence is that of Putative carboxypeptidase suro-1 from Caenorhabditis elegans.